The chain runs to 58 residues: Small ribosomal subunit protein bS21 (58 aa).

The span at 32-42 shows a compositional bias: basic and acidic residues; that stretch reads VRKREHYEKPS. The tract at residues 32 to 58 is disordered; that stretch reads VRKREHYEKPSVKKKKKSEAARKRKFK. Residues 43-58 show a composition bias toward basic residues; sequence VKKKKKSEAARKRKFK.

It belongs to the bacterial ribosomal protein bS21 family.

This is Small ribosomal subunit protein bS21 from Clostridium botulinum (strain Okra / Type B1).